A 65-amino-acid chain; its full sequence is UPF0434 protein IL1511 (65 aa).

The protein belongs to the UPF0434 family.

The chain is UPF0434 protein IL1511 from Idiomarina loihiensis (strain ATCC BAA-735 / DSM 15497 / L2-TR).